The chain runs to 250 residues: Entry-fusion complex associated protein OPG095 (250 aa).

G2 carries the N-myristoyl glycine; by host lipid modification. The tract at residues 2–12 (GAAASIQTTVN) is targeting to MV membrane. The Virion surface portion of the chain corresponds to 2-183 (GAAASIQTTV…IAPRQVAGTG (182 aa)). 3 disulfide bridges follow: C34-C57, C49-C136, and C116-C158. The helical transmembrane segment at 184–204 (VQFYMIVIGVIILAALFMYYA) threads the bilayer. The Intravirion portion of the chain corresponds to 205–250 (KRMLFTSTNDKIKLILANKENVHWTTYMDTFFRTSPMVIATTDIQN).

Belongs to the orthopoxvirus OPG095 family. As to quaternary structure, component of the entry fusion complex (EFC) composed of OPG053, OPG076, OPG086, OPG094, OPG095, OPG099, OPG107, OPG143, OPG104, OPG147 and OPG155. Except for OPG095 and OPG053, each of the EFC proteins is required for assembly or stability of the complex. Myristoylated. Post-translationally, disulfid bonds are oxidized in the cytoplasm by OPG088 protein. In terms of processing, unglycosylated because produced in viral factories instead of the classic ER -Golgi route.

The protein resides in the virion membrane. Component of the entry fusion complex (EFC), which consists of 11 proteins. During cell infection, this complex mediates entry of the virion core into the host cytoplasm by a two-step mechanism consisting of lipid mixing of the viral and cellular membranes and subsequent pore formation. This is Entry-fusion complex associated protein OPG095 (OPG099) from Variola virus (isolate Human/India/Ind3/1967) (VARV).